Reading from the N-terminus, the 55-residue chain is Cortexin domain containing 2 (55 aa).

The helical transmembrane segment at F16–A36 threads the bilayer.

The protein resides in the membrane. This Homo sapiens (Human) protein is Cortexin domain containing 2.